We begin with the raw amino-acid sequence, 352 residues long: Glycerol-3-phosphate dehydrogenase 1-like protein (352 aa).

13–18 is a binding site for NAD(+); sequence GSGNWG. A substrate-binding site is contributed by Lys-123. Ala-156 contributes to the NAD(+) binding site. Lys-207 serves as the catalytic Proton acceptor. Residues Arg-272, Lys-299, and Gln-301 each coordinate NAD(+). 272–273 lines the substrate pocket; it reads RN.

This sequence belongs to the NAD-dependent glycerol-3-phosphate dehydrogenase family.

It is found in the cytoplasm. The catalysed reaction is sn-glycerol 3-phosphate + NAD(+) = dihydroxyacetone phosphate + NADH + H(+). Plays a role in regulating cardiac sodium current. This Xenopus tropicalis (Western clawed frog) protein is Glycerol-3-phosphate dehydrogenase 1-like protein (gpd1l).